The primary structure comprises 656 residues: RNA-binding protein EWS (656 aa).

The tract at residues 1–285 (MASTDYSTYS…GVYGQESGGF (285 aa)) is EAD (Gln/Pro/Thr-rich). Tandem repeats lie at residues 8-16 (TYSQAAAQQ), 17-27 (GYSAYTAQPTQ), 28-34 (GYAQTTQ), 35-42 (AYGQQSYG), 43-50 (TYGQPTDV), 51-59 (SYTQAQTTA), 60-68 (TYGQTAYAT), 69-75 (SYGQPPT), 76-84 (GYTTPTAPQ), 85-91 (AYSQPVQ), 92-110 (GYGT…TTQA), 111-116 (SYAAQS), 117-125 (AYGTQPAYP), 126-156 (AYGQ…SSTG), 157-163 (GYNQPSL), 164-170 (GYGQSNY), 171-177 (SYPQVPG), 178-188 (SYPMQPVTAPP), 189-193 (SYPPT), 194-201 (SYSSTQPT), 202-206 (SYDQS), 207-212 (SYSQQN), 213-218 (TYGQPS), 219-224 (SYGQQS), 225-230 (SYGQQS), 231-238 (SYGQQPPT), 239-245 (SYPPQTG), 246-252 (SYSQAPS), 253-259 (QYSQQSS), 260-276 (SYGQ…SSMG), and 277-285 (VYGQESGGF). A 31 X approximate tandem repeats region spans residues 8–285 (TYSQAAAQQG…GVYGQESGGF (278 aa)). A compositionally biased stretch (low complexity) spans 123–137 (AYPAYGQQPAATAPT). The interval 123 to 360 (AYPAYGQQPA…PVDPDEDSDN (238 aa)) is disordered. Residues 143 to 172 (NKPTETSQPQSSTGGYNQPSLGYGQSNYSY) show a composition bias toward polar residues. Residues 192-266 (PTSYSSTQPT…QSSSYGQQSS (75 aa)) are compositionally biased toward low complexity. The IQ domain occupies 256-285 (QQSSSYGQQSSFRQDHPSSMGVYGQESGGF). Ser266 is modified (phosphoserine; by PKC). An asymmetric dimethylarginine mark is found at Arg300, Arg302, Arg304, Arg309, Arg314, Arg317, and Arg321. Over residues 308–335 (DRGGMSRGGRGGGRGGMGSAGERGGFNK) the composition is skewed to gly residues. Residues 336–350 (PGGPMDEGPDLDLGP) are compositionally biased toward low complexity. Residues 361–447 (SAIYVQGLND…SKLKVSLARK (87 aa)) enclose the RRM domain. Lys439 is subject to N6-acetyllysine. Disordered stretches follow at residues 448-525 (KPPM…WQCP) and 547-656 (KPEG…DRPY). Asymmetric dimethylarginine occurs at positions 455 and 464. Arg471 bears the Asymmetric dimethylarginine; alternate mark. Arg471 is modified (omega-N-methylarginine; alternate). Residues 472 to 490 (GGPGGPGGPGGPMGRMGGR) are compositionally biased toward gly residues. Arg486 carries the post-translational modification Omega-N-methylarginine. An Asymmetric dimethylarginine; by PRMT8 modification is found at Arg490. Arg494, Arg500, and Arg503 each carry asymmetric dimethylarginine. Asymmetric dimethylarginine; alternate is present on Arg506. An Omega-N-methylarginine; alternate modification is found at Arg506. The RanBP2-type zinc finger occupies 518–549 (RAGDWQCPNPGCGNQNFAWRTECNQCKAPKPE). The segment covering 551–560 (FLPPPFPPPG) has biased composition (pro residues). 2 positions are modified to asymmetric dimethylarginine: Arg563 and Arg565. Positions 566–591 (GGPGGMRGGRGGLMDRGGPGGMFRGG) are enriched in gly residues. Position 572 is an asymmetric dimethylarginine; alternate; by PRMT8 (Arg572). An Omega-N-methylarginine; alternate; by PRMT8 modification is found at Arg572. Asymmetric dimethylarginine occurs at positions 575, 581, 589, and 592. Positions 592-606 (RGGDRGGFRGGRGMD) are enriched in basic and acidic residues. Residue Arg596 is modified to Asymmetric dimethylarginine; alternate; by PRMT8. Residue Arg596 is modified to Omega-N-methylarginine; alternate; by PRMT8. Arg600 bears the Asymmetric dimethylarginine mark. Arg603 is modified (asymmetric dimethylarginine; by PRMT8). Arg607 is subject to Asymmetric dimethylarginine; alternate; by PRMT8. Omega-N-methylarginine; alternate; by PRMT8 is present on Arg607. Residues 607–618 (RGGFGGGRRGGP) are compositionally biased toward gly residues. Arg615 is modified (asymmetric dimethylarginine; alternate). Arg615 carries the omega-N-methylarginine; alternate modification. Residues Arg633 and Arg636 each carry the asymmetric dimethylarginine modification. A Nuclear localization signal motif is present at residues 639 to 656 (PGKMDKGEHRQERRDRPY). Basic and acidic residues predominate over residues 641 to 656 (KMDKGEHRQERRDRPY).

Belongs to the RRM TET family. Binds POLR2C, SF1, calmodulin and RNA. Interacts with PTK2B/FAK2 and TDRD3. Binds calmodulin in the presence, but not in the absence, of calcium ion. Forms a complex with REC8, PRDM9, SYCP3 and SYCP1; complex formation is dependent of phosphorylated form of REC8 and requires PRDM9 bound to hotspot DNA; EWSR1 joins PRDM9 with the chromosomal axis through REC8. Phosphorylated; calmodulin-binding inhibits phosphorylation of Ser-266. Post-translationally, highly methylated on arginine residues. Methylation is mediated by PRMT1 and, at lower level by PRMT8. In terms of tissue distribution, ubiquitous.

It localises to the nucleus. It is found in the cytoplasm. The protein resides in the cell membrane. In terms of biological role, binds to ssRNA containing the consensus sequence 5'-AGGUAA-3'. Might normally function as a transcriptional repressor. EWS-fusion-proteins (EFPS) may play a role in the tumorigenic process. They may disturb gene expression by mimicking, or interfering with the normal function of CTD-POLII within the transcription initiation complex. They may also contribute to an aberrant activation of the fusion protein target genes. The protein is RNA-binding protein EWS (EWSR1) of Homo sapiens (Human).